Here is a 188-residue protein sequence, read N- to C-terminus: Elongation factor P (188 aa).

Lys-34 carries the N6-(3,6-diaminohexanoyl)-5-hydroxylysine modification.

This sequence belongs to the elongation factor P family. May be beta-lysylated on the epsilon-amino group of Lys-34 by the combined action of EpmA and EpmB, and then hydroxylated on the C5 position of the same residue by EpmC (if this protein is present). Lysylation is critical for the stimulatory effect of EF-P on peptide-bond formation. The lysylation moiety may extend toward the peptidyltransferase center and stabilize the terminal 3-CCA end of the tRNA. Hydroxylation of the C5 position on Lys-34 may allow additional potential stabilizing hydrogen-bond interactions with the P-tRNA.

It is found in the cytoplasm. Its pathway is protein biosynthesis; polypeptide chain elongation. Its function is as follows. Involved in peptide bond synthesis. Alleviates ribosome stalling that occurs when 3 or more consecutive Pro residues or the sequence PPG is present in a protein, possibly by augmenting the peptidyl transferase activity of the ribosome. Modification of Lys-34 is required for alleviation. The protein is Elongation factor P of Proteus mirabilis (strain HI4320).